The following is a 150-amino-acid chain: Ribonuclease pancreatic delta-type (150 aa).

The signal sequence occupies residues 1 to 25 (MGLEKSFILFSLLVLVLGWVQPSLG). Position 35 (Arg-35) interacts with substrate. The active-site Proton acceptor is His-37. Disulfide bonds link Cys-51–Cys-110, Cys-65–Cys-121, Cys-83–Cys-136, and Cys-90–Cys-98. Substrate-binding positions include 66–70 (KPVNT) and Lys-91. His-145 serves as the catalytic Proton donor.

This sequence belongs to the pancreatic ribonuclease family. In terms of assembly, monomer.

The protein resides in the secreted. It catalyses the reaction an [RNA] containing cytidine + H2O = an [RNA]-3'-cytidine-3'-phosphate + a 5'-hydroxy-ribonucleotide-3'-[RNA].. The catalysed reaction is an [RNA] containing uridine + H2O = an [RNA]-3'-uridine-3'-phosphate + a 5'-hydroxy-ribonucleotide-3'-[RNA].. Endonuclease that catalyzes the cleavage of RNA on the 3' side of pyrimidine nucleotides. Acts on single-stranded and double-stranded RNA. In Rattus tiomanicus (Malayan field rat), this protein is Ribonuclease pancreatic delta-type.